We begin with the raw amino-acid sequence, 292 residues long: Putative pyruvate, phosphate dikinase regulatory protein (292 aa).

Position 155–162 (155–162 (GVSRSSKT)) interacts with ADP.

Belongs to the pyruvate, phosphate/water dikinase regulatory protein family. PDRP subfamily.

The enzyme catalyses N(tele)-phospho-L-histidyl/L-threonyl-[pyruvate, phosphate dikinase] + ADP = N(tele)-phospho-L-histidyl/O-phospho-L-threonyl-[pyruvate, phosphate dikinase] + AMP + H(+). It carries out the reaction N(tele)-phospho-L-histidyl/O-phospho-L-threonyl-[pyruvate, phosphate dikinase] + phosphate + H(+) = N(tele)-phospho-L-histidyl/L-threonyl-[pyruvate, phosphate dikinase] + diphosphate. Its function is as follows. Bifunctional serine/threonine kinase and phosphorylase involved in the regulation of the pyruvate, phosphate dikinase (PPDK) by catalyzing its phosphorylation/dephosphorylation. This is Putative pyruvate, phosphate dikinase regulatory protein from Acidiphilium cryptum (strain JF-5).